We begin with the raw amino-acid sequence, 164 residues long: Cell division protein SepF (164 aa).

The segment at 29–57 (INKGRGASQQEYDEYYEDSTPTVTQKEDP) is disordered.

It belongs to the SepF family. In terms of assembly, homodimer. Interacts with FtsZ.

Its subcellular location is the cytoplasm. Cell division protein that is part of the divisome complex and is recruited early to the Z-ring. Probably stimulates Z-ring formation, perhaps through the cross-linking of FtsZ protofilaments. Its function overlaps with FtsA. This Exiguobacterium sibiricum (strain DSM 17290 / CCUG 55495 / CIP 109462 / JCM 13490 / 255-15) protein is Cell division protein SepF.